The primary structure comprises 101 residues: Small ribosomal subunit protein uS14 (101 aa).

The segment covering 1–10 has biased composition (basic and acidic residues); sequence MAKKSAIEKN. Residues 1-23 are disordered; it reads MAKKSAIEKNNRRKKMTKNAAPK. Residues 11–23 are compositionally biased toward basic residues; that stretch reads NRRKKMTKNAAPK.

Belongs to the universal ribosomal protein uS14 family. In terms of assembly, part of the 30S ribosomal subunit. Contacts proteins S3 and S10.

In terms of biological role, binds 16S rRNA, required for the assembly of 30S particles and may also be responsible for determining the conformation of the 16S rRNA at the A site. The sequence is that of Small ribosomal subunit protein uS14 from Rhodopseudomonas palustris (strain TIE-1).